Consider the following 284-residue polypeptide: MTAQIISGTEMARTIRTALADEAAQLKADGVEPGLAVILVGDDPASHSYVKGKQKACAEVGIRSFLYTFPAAIDEETLLAKIRELNVDPAVHGILVQLPLPDHICEWSVIETIAPEKDVDGFHPINVGKMMIGQRAFLPCTPHGILVMVQSAGIDIAGKHVVVVGRSNIVGKPVGQLFLREHATVTYTHSKTPDLAAITRQADILIVAVGKARLIGPEHIKPGAVVIDVGVNRLENGKLCGDVDFDAVKEVAGYITPVPGGVGPMTITMLLHNTIEAARQLAAK.

Residues 165–167 (GRS), Ser-190, and Val-231 each bind NADP(+).

The protein belongs to the tetrahydrofolate dehydrogenase/cyclohydrolase family. Homodimer.

The catalysed reaction is (6R)-5,10-methylene-5,6,7,8-tetrahydrofolate + NADP(+) = (6R)-5,10-methenyltetrahydrofolate + NADPH. It catalyses the reaction (6R)-5,10-methenyltetrahydrofolate + H2O = (6R)-10-formyltetrahydrofolate + H(+). Its pathway is one-carbon metabolism; tetrahydrofolate interconversion. In terms of biological role, catalyzes the oxidation of 5,10-methylenetetrahydrofolate to 5,10-methenyltetrahydrofolate and then the hydrolysis of 5,10-methenyltetrahydrofolate to 10-formyltetrahydrofolate. The protein is Bifunctional protein FolD of Geobacillus kaustophilus (strain HTA426).